A 294-amino-acid chain; its full sequence is Cell division protein ZipA (294 aa).

M1 is a topological domain (periplasmic). The helical transmembrane segment at E2–F22 threads the bilayer. Residues D23 to R294 lie on the Cytoplasmic side of the membrane. 2 disordered regions span residues T64–N111 and K126–V146. Positions A82–P91 are enriched in basic and acidic residues.

Belongs to the ZipA family. In terms of assembly, interacts with FtsZ via their C-terminal domains.

It localises to the cell inner membrane. Its function is as follows. Essential cell division protein that stabilizes the FtsZ protofilaments by cross-linking them and that serves as a cytoplasmic membrane anchor for the Z ring. Also required for the recruitment to the septal ring of downstream cell division proteins. This chain is Cell division protein ZipA, found in Pseudomonas entomophila (strain L48).